The sequence spans 74 residues: Conotoxin AbVIL (74 aa).

An N-terminal signal peptide occupies residues 1-17; that stretch reads VLIIAVLFLTACQLTTA. The segment at 17–41 is disordered; sequence AETSSRGEQKHRAPRSTDKNSRMTK. Residues 18-40 constitute a propeptide that is removed on maturation; sequence ETSSRGEQKHRAPRSTDKNSRMT. Basic and acidic residues predominate over residues 21-37; the sequence is SRGEQKHRAPRSTDKNS. Cystine bridges form between Cys43–Cys57, Cys50–Cys61, and Cys56–Cys68.

It belongs to the conotoxin O1 superfamily. As to expression, expressed by the venom duct.

Its subcellular location is the secreted. In Conus abbreviatus (Abbreviated cone), this protein is Conotoxin AbVIL.